Consider the following 479-residue polypeptide: Flap endonuclease 1 (479 aa).

Residues Met-1–Arg-106 form an N-domain region. Asp-34 is a Mg(2+) binding site. DNA-binding residues include Arg-47 and Arg-72. Residues Asp-88, Glu-160, Glu-162, Asp-181, and Asp-183 each contribute to the Mg(2+) site. Positions Glu-124–Tyr-266 are I-domain. Glu-160 contacts DNA. Residues Gly-244 and Asp-246 each coordinate DNA. Asp-246 is a Mg(2+) binding site. Positions Thr-349 to Phe-357 are interaction with PCNA. Residues Ala-379–Glu-455 are disordered. The span at Asn-403 to Asp-428 shows a compositional bias: basic and acidic residues.

Belongs to the XPG/RAD2 endonuclease family. FEN1 subfamily. In terms of assembly, interacts with PCNA. Three molecules of FEN1 bind to one PCNA trimer with each molecule binding to one PCNA monomer. PCNA stimulates the nuclease activity without altering cleavage specificity. Mg(2+) serves as cofactor. In terms of processing, phosphorylated. Phosphorylation upon DNA damage induces relocalization to the nuclear plasma.

The protein localises to the nucleus. It localises to the nucleolus. It is found in the nucleoplasm. Its subcellular location is the mitochondrion. In terms of biological role, structure-specific nuclease with 5'-flap endonuclease and 5'-3' exonuclease activities involved in DNA replication and repair. During DNA replication, cleaves the 5'-overhanging flap structure that is generated by displacement synthesis when DNA polymerase encounters the 5'-end of a downstream Okazaki fragment. It enters the flap from the 5'-end and then tracks to cleave the flap base, leaving a nick for ligation. Also involved in the long patch base excision repair (LP-BER) pathway, by cleaving within the apurinic/apyrimidinic (AP) site-terminated flap. Acts as a genome stabilization factor that prevents flaps from equilibrating into structures that lead to duplications and deletions. Also possesses 5'-3' exonuclease activity on nicked or gapped double-stranded DNA, and exhibits RNase H activity. Also involved in replication and repair of rDNA and in repairing mitochondrial DNA. In Plasmodium chabaudi chabaudi, this protein is Flap endonuclease 1.